The primary structure comprises 271 residues: Membrane protein insertase YidC 1 (271 aa).

Residues 1–20 (MKKKLKTFSLILLTGSLLVA) form the signal peptide. The N-palmitoyl cysteine moiety is linked to residue C21. The S-diacylglycerol cysteine moiety is linked to residue C21. 4 helical membrane-spanning segments follow: residues 45–65 (IQWL…TLII), 124–144 (YASV…FQAL), 163–183 (PDPY…STWL), and 201–221 (VMPF…VLYW).

Belongs to the OXA1/ALB3/YidC family. Type 2 subfamily.

It localises to the cell membrane. Required for the insertion and/or proper folding and/or complex formation of integral membrane proteins into the membrane. Involved in integration of membrane proteins that insert both dependently and independently of the Sec translocase complex, as well as at least some lipoproteins. The protein is Membrane protein insertase YidC 1 of Streptococcus agalactiae serotype V (strain ATCC BAA-611 / 2603 V/R).